The primary structure comprises 528 residues: Coiled-coil domain-containing protein 116 (528 aa).

The tract at residues 43-68 (GHVPHPPSTCGSSALQNQRRNKRHPQ) is disordered. The span at 51-60 (TCGSSALQNQ) shows a compositional bias: polar residues. A coiled-coil region spans residues 81–104 (HVLDSLETVVEKATERMAAMKTEA). Disordered stretches follow at residues 335–444 (PLFP…RQRA) and 497–528 (SSSPSSLCPEVTSSKVGPDMSLQEKGSLTHHS). The span at 363-378 (PTNSGQPHPTVSSPKT) shows a compositional bias: polar residues. Serine 389 carries the phosphoserine modification. The span at 419–429 (HSREKEPDSDP) shows a compositional bias: basic and acidic residues. Polar residues predominate over residues 434 to 443 (PPVSLSSRQR). Over residues 497-510 (SSSPSSLCPEVTSS) the composition is skewed to low complexity.

It localises to the cytoplasm. It is found in the cytoskeleton. The protein localises to the microtubule organizing center. Its subcellular location is the centrosome. This is Coiled-coil domain-containing protein 116 (CCDC116) from Macaca fascicularis (Crab-eating macaque).